A 272-amino-acid chain; its full sequence is Protein STAY-GREEN 1, chloroplastic (272 aa).

A chloroplast-targeting transit peptide spans 1 to 50; it reads MGTLTTSLVVPSKLNNEQQSSIFIHKTRRKCKKNQSIVPVARLFGPAIFE. A disordered region spans residues 201–222; it reads TSPSSSSGGVGGVKSTSFTSNS.

Belongs to the staygreen family. As to quaternary structure, interacts with PSY1.

It is found in the plastid. It localises to the chloroplast. Functionally, required to trigger chlorophyll degradation during leaf senescence and fruit ripening. Binds directly PSY1 to regulate the accumulation of lycopene and beta-carotene in the maturing fruits. This Solanum lycopersicum (Tomato) protein is Protein STAY-GREEN 1, chloroplastic.